The following is a 321-amino-acid chain: Peptidase 1 (321 aa).

A signal peptide spans 1 to 18 (MKIILAIASLLVLSAVYA). Residues 19–98 (RPASIKTFEE…LKTQFDLNAE (80 aa)) constitute a propeptide that is removed on maturation. N34 is a glycosylation site (N-linked (GlcNAc...) asparagine). C130 and C170 are joined by a disulfide. C133 is an active-site residue. N151 is a glycosylation site (N-linked (GlcNAc...) asparagine). Active-site residues include H269 and N289.

The protein belongs to the peptidase C1 family.

It is found in the secreted. It carries out the reaction Broad endopeptidase specificity.. Its function is as follows. Probable thiol protease. This Euroglyphus maynei (Mayne's house dust mite) protein is Peptidase 1 (EURM1).